Here is a 62-residue protein sequence, read N- to C-terminus: Large ribosomal subunit protein uL30 (62 aa).

It belongs to the universal ribosomal protein uL30 family. Part of the 50S ribosomal subunit.

This Roseobacter denitrificans (strain ATCC 33942 / OCh 114) (Erythrobacter sp. (strain OCh 114)) protein is Large ribosomal subunit protein uL30.